A 1411-amino-acid chain; its full sequence is ATP-dependent permease PDR11 (1411 aa).

Topologically, residues 2–388 (SLSKYFNPIP…IGDRNYLISQ (387 aa)) are cytoplasmic. Residues 31 to 273 (VQNDEESASE…FHDTLQIKKN (243 aa)) form the ABC transporter 1 domain. A helical membrane pass occupies residues 389–409 (FVSVVVQSLVIGSLFYNIPLT). Over 410–418 (TIGSFSRGS) the chain is Extracellular. A helical membrane pass occupies residues 419–439 (LTFFSILFFTFLSLADMPASF). Topologically, residues 440–471 (QRQPVVRKHVQLHFYYNWVETLATNFFDCCSK) are cytoplasmic. Residues 472–492 (FILVVIFTIILYFLAHLQYNA) traverse the membrane as a helical segment. Residues 493-494 (AR) lie on the Extracellular side of the membrane. A helical membrane pass occupies residues 495–515 (FFIFLLFLSVYNFCMVSLFAL). Residues 516–524 (TALIAPTLS) lie on the Cytoplasmic side of the membrane. Residues 525–545 (MANLLAGILLLAIAMYASYVI) traverse the membrane as a helical segment. Over 546 to 636 (YMKDMHPWFI…YTYHHVWRNF (91 aa)) the chain is Extracellular. Asn-595 carries N-linked (GlcNAc...) asparagine glycosylation. The chain crosses the membrane as a helical span at residues 637–657 (GIIIGFLCFFLFCSLLAAEYI). The Cytoplasmic portion of the chain corresponds to 658–1090 (TPLFTRENLL…QYICTKRDMT (433 aa)). In terms of domain architecture, ABC transporter 2 spans 751–979 (ISWKNINYTI…FVAHDRRLTF (229 aa)). 782-789 (GESGAGKT) contributes to the ATP binding site. The chain crosses the membrane as a helical span at residues 1091-1111 (YVFAKYALNAGAGLFIGFSFW). Topologically, residues 1112-1117 (RTKHNI) are extracellular. Residues 1118-1138 (NGLQDAIFLCFMMLCVSSPLI) form a helical membrane-spanning segment. Residues 1139-1175 (NQVQDKALQSKEVYIAREARSNTYHWTVLLIAQTIVE) lie on the Cytoplasmic side of the membrane. A helical membrane pass occupies residues 1176 to 1196 (LPLAISSSTLFFLCCYFCCGF). Residues 1197 to 1204 (ETSARVAG) are Extracellular-facing. The helical transmembrane segment at 1205–1225 (VFYLNYILFSMYYLSFGLWLL) threads the bilayer. Over 1226–1230 (YSAPD) the chain is Cytoplasmic. The helical transmembrane segment at 1231–1251 (LQTAAVFVAFLYSFTASFCGV) threads the bilayer. The Extracellular segment spans residues 1252–1355 (MQPYSLFPRF…NMSYHHRWRN (104 aa)). Residues Asn-1289, Asn-1324, and Asn-1346 are each glycosylated (N-linked (GlcNAc...) asparagine). Residues 1356–1376 (FGFEWVFVCFNIAAMFVGFYL) traverse the membrane as a helical segment. The Cytoplasmic portion of the chain corresponds to 1377-1411 (TYIKKIWPSVIDGIKKCIPSMRRSKTSHNPNEQSV).

The protein belongs to the ABC transporter superfamily. ABCG family. PDR (TC 3.A.1.205) subfamily.

It is found in the membrane. Functionally, transporter involved in the uptake of sterol. The chain is ATP-dependent permease PDR11 (PDR11) from Saccharomyces cerevisiae (strain ATCC 204508 / S288c) (Baker's yeast).